A 131-amino-acid chain; its full sequence is Fumarate reductase subunit C (131 aa).

3 consecutive transmembrane segments (helical) span residues 30–50, 63–83, and 109–129; these read EGTAVPAVWFSIELIFGLFAL, FLQNPVIVIINLITLAAALLH, and IIKSLWAVTVVATIVILFVAL.

Belongs to the FrdC family. Part of an enzyme complex containing four subunits: a flavoprotein (FrdA), an iron-sulfur protein (FrdB), and two hydrophobic anchor proteins (FrdC and FrdD).

Its subcellular location is the cell inner membrane. In terms of biological role, two distinct, membrane-bound, FAD-containing enzymes are responsible for the catalysis of fumarate and succinate interconversion; fumarate reductase is used in anaerobic growth, and succinate dehydrogenase is used in aerobic growth. Anchors the catalytic components of the fumarate reductase complex to the cell inner membrane, binds quinones. In Escherichia coli O17:K52:H18 (strain UMN026 / ExPEC), this protein is Fumarate reductase subunit C.